A 209-amino-acid polypeptide reads, in one-letter code: MSIEKQVAEQLLEIKAVFLKPNEPFTWASGIKSPIYCDNRLTLGFPKVRQFIAKSLAEKIKQTFGEVDVVAGTATAGIPHAAWVSDLLDLPMVYVRSKAKEHGKGNQIEGPISKGQKVVVIEDLISTGGSSLKAVEALEEAGAEVVGIAAIFTYGLAKGKQLLEESGTKLVTLTNYDELIEVALNENYVTGEDMETLKEWKKNPENWGK.

5-phospho-alpha-D-ribose 1-diphosphate is bound by residues arginine 96, lysine 100, histidine 102, and 122–130 (EDLISTGGS). Serine 126 contributes to the orotate binding site.

The protein belongs to the purine/pyrimidine phosphoribosyltransferase family. PyrE subfamily. Homodimer. Requires Mg(2+) as cofactor.

It catalyses the reaction orotidine 5'-phosphate + diphosphate = orotate + 5-phospho-alpha-D-ribose 1-diphosphate. The protein operates within pyrimidine metabolism; UMP biosynthesis via de novo pathway; UMP from orotate: step 1/2. Catalyzes the transfer of a ribosyl phosphate group from 5-phosphoribose 1-diphosphate to orotate, leading to the formation of orotidine monophosphate (OMP). The polypeptide is Orotate phosphoribosyltransferase (Listeria monocytogenes serotype 4b (strain F2365)).